The primary structure comprises 492 residues: uncharacterized protein (492 aa).

The first 22 residues, 1–22 (MIRPNMFALLMLVVLAITSVNA), serve as a signal peptide directing secretion. N-linked (GlcNAc...) asparagine; by host glycans are attached at residues Asn-92, Asn-97, Asn-119, Asn-146, Asn-213, Asn-267, and Asn-458.

It localises to the secreted. This is an uncharacterized protein from Acanthamoeba polyphaga (Amoeba).